Here is a 449-residue protein sequence, read N- to C-terminus: NADH-quinone oxidoreductase subunit D (449 aa).

It belongs to the complex I 49 kDa subunit family. As to quaternary structure, NDH-1 is composed of 14 different subunits. Subunits NuoB, C, D, E, F, and G constitute the peripheral sector of the complex.

The protein localises to the cell membrane. The enzyme catalyses a quinone + NADH + 5 H(+)(in) = a quinol + NAD(+) + 4 H(+)(out). NDH-1 shuttles electrons from NADH, via FMN and iron-sulfur (Fe-S) centers, to quinones in the respiratory chain. The immediate electron acceptor for the enzyme in this species is believed to be a menaquinone. Couples the redox reaction to proton translocation (for every two electrons transferred, four hydrogen ions are translocated across the cytoplasmic membrane), and thus conserves the redox energy in a proton gradient. The sequence is that of NADH-quinone oxidoreductase subunit D from Saccharopolyspora erythraea (strain ATCC 11635 / DSM 40517 / JCM 4748 / NBRC 13426 / NCIMB 8594 / NRRL 2338).